A 349-amino-acid chain; its full sequence is Glycerol-3-phosphate dehydrogenase [NAD(P)+] (349 aa).

The NADPH site is built by Ser-31, Phe-32, Arg-52, Lys-53, and Lys-126. Sn-glycerol 3-phosphate-binding residues include Lys-126, Gly-154, and Ser-156. Ala-158 serves as a coordination point for NADPH. 5 residues coordinate sn-glycerol 3-phosphate: Lys-209, Asp-262, Ser-272, Arg-273, and Asn-274. Catalysis depends on Lys-209, which acts as the Proton acceptor. Arg-273 contacts NADPH. Residues Val-297 and Glu-299 each contribute to the NADPH site.

The protein belongs to the NAD-dependent glycerol-3-phosphate dehydrogenase family.

Its subcellular location is the cytoplasm. It carries out the reaction sn-glycerol 3-phosphate + NAD(+) = dihydroxyacetone phosphate + NADH + H(+). The catalysed reaction is sn-glycerol 3-phosphate + NADP(+) = dihydroxyacetone phosphate + NADPH + H(+). It participates in membrane lipid metabolism; glycerophospholipid metabolism. Its function is as follows. Catalyzes the reduction of the glycolytic intermediate dihydroxyacetone phosphate (DHAP) to sn-glycerol 3-phosphate (G3P), the key precursor for phospholipid synthesis. The sequence is that of Glycerol-3-phosphate dehydrogenase [NAD(P)+] from Clostridium tetani (strain Massachusetts / E88).